A 252-amino-acid polypeptide reads, in one-letter code: Triosephosphate isomerase (252 aa).

11–13 serves as a coordination point for substrate; sequence NWK. Residue H97 is the Electrophile of the active site. The active-site Proton acceptor is the E169. Residues G175, S215, and 236 to 237 each bind substrate; that span reads GG.

Belongs to the triosephosphate isomerase family. As to quaternary structure, homodimer.

The protein resides in the cytoplasm. It carries out the reaction D-glyceraldehyde 3-phosphate = dihydroxyacetone phosphate. The protein operates within carbohydrate biosynthesis; gluconeogenesis. It functions in the pathway carbohydrate degradation; glycolysis; D-glyceraldehyde 3-phosphate from glycerone phosphate: step 1/1. In terms of biological role, involved in the gluconeogenesis. Catalyzes stereospecifically the conversion of dihydroxyacetone phosphate (DHAP) to D-glyceraldehyde-3-phosphate (G3P). The sequence is that of Triosephosphate isomerase from Mycoplasmoides gallisepticum (strain R(low / passage 15 / clone 2)) (Mycoplasma gallisepticum).